The primary structure comprises 214 residues: YINYKNMSHQHMLTLFNLLPVGSNISIWWNFGSMLLACLMIQTITGFFLAIHYTANIDLAFSSIVHISRDVPCGWIMQNTXAIGASMFFICIYIHIARGIYYGSYLNKEVWLSGTTLLITLMATAFFGYVLPWGQMSFWAATVITNLLTAIPYLGTTLTTWLWGGFAINDPTLTRFFALHFILPFIIISLSSAHILLLHNEGSNNPLGTNSDID.

A run of 4 helical transmembrane segments spans residues 31–51 (FGSM…FLAI), 75–96 (WIMQ…YIHI), 111–131 (WLSG…GYVL), and 176–196 (FFAL…AHIL). The heme b site is built by Xaa-81 and His-95. Heme b-binding residues include His-180 and His-194. His-199 is an a ubiquinone binding site.

Belongs to the cytochrome b family. The cytochrome bc1 complex contains 3 respiratory subunits (MT-CYB, CYC1 and UQCRFS1), 2 core proteins (UQCRC1 and UQCRC2) and probably 6 low-molecular weight proteins. The cofactor is heme b.

The protein localises to the mitochondrion inner membrane. In terms of biological role, component of the ubiquinol-cytochrome c reductase complex (complex III or cytochrome b-c1 complex) that is part of the mitochondrial respiratory chain. The b-c1 complex mediates electron transfer from ubiquinol to cytochrome c. Contributes to the generation of a proton gradient across the mitochondrial membrane that is then used for ATP synthesis. The chain is Cytochrome b (MT-CYB) from Bothriechis schlegelii (Eyelash palm pitviper).